A 387-amino-acid chain; its full sequence is F-box only protein 4 (387 aa).

Residues S11, S12, and S48 each carry the phosphoserine modification. An F-box domain is found at 56 to 102 (ASSLTRLPIDVQLYILSFLSPHDLCQLGSTSRYWNETVRDPILWRYF).

Homodimer. Part of the SCF (SKP1-CUL1-F-box) E3 ubiquitin-protein ligase complex SCF(FBXO4) formed of CUL1, SKP1, RBX1 and FBXO4. Interacts with TERF1; this interaction is prevented in the presence of GNL3L. Identified in a complex with CRYAB and CCND1. Post-translationally, phosphorylation at Ser-11 varies during the cell cycle. It is low in resting cells and high in the S phase and the G2/M phase of the cell cycle. Phosphorylation is decreased during late G1 phase. Phosphorylation at Ser-11 promotes homodimerization and is necessary for optimal ubiquitin ligase activity towards CCND1.

It localises to the cytoplasm. It participates in protein modification; protein ubiquitination. Substrate recognition component of a SCF (SKP1-CUL1-F-box protein) E3 ubiquitin-protein ligase complex that mediates the ubiquitination and subsequent proteasomal degradation of target proteins. Promotes ubiquitination of cyclin-D1 (CCND1) and its subsequent proteasomal degradation. However, it does not act as a major regulator of CCND1 stability during the G1/S transition. Recognizes TERF1 and promotes its ubiquitination together with UBE2D1. Promotes ubiquitination of FXR1 following phosphorylation of FXR1 by GSK3B, leading to FXR1 degradation by the proteasome. This is F-box only protein 4 (FBXO4) from Bos taurus (Bovine).